A 346-amino-acid chain; its full sequence is UDP-N-acetylenolpyruvoylglucosamine reductase (346 aa).

The FAD-binding PCMH-type domain occupies 18 to 189 (LHAQARAFIA…VSVVFALKTH (172 aa)). Arginine 165 is a catalytic residue. The active-site Proton donor is serine 240. Glutamate 336 is an active-site residue.

It belongs to the MurB family. Requires FAD as cofactor.

The protein localises to the cytoplasm. It catalyses the reaction UDP-N-acetyl-alpha-D-muramate + NADP(+) = UDP-N-acetyl-3-O-(1-carboxyvinyl)-alpha-D-glucosamine + NADPH + H(+). Its pathway is cell wall biogenesis; peptidoglycan biosynthesis. Functionally, cell wall formation. This chain is UDP-N-acetylenolpyruvoylglucosamine reductase, found in Neisseria gonorrhoeae (strain ATCC 700825 / FA 1090).